We begin with the raw amino-acid sequence, 143 residues long: Large ribosomal subunit protein uL15 (143 aa).

2 stretches are compositionally biased toward basic residues: residues 1–13 (MIRK…KMRG) and 23–38 (KKHR…GNAG). The interval 1 to 38 (MIRKSKKITKMRGSRTCGYGEAKKHRGAGHRGGRGNAG) is disordered.

It belongs to the universal ribosomal protein uL15 family. In terms of assembly, part of the 50S ribosomal subunit.

Functionally, binds to the 23S rRNA. The sequence is that of Large ribosomal subunit protein uL15 from Methanococcus maripaludis (strain C6 / ATCC BAA-1332).